We begin with the raw amino-acid sequence, 316 residues long: 1-aminocyclopropane-1-carboxylate oxidase 4 (316 aa).

The Fe2OG dioxygenase domain occupies 153–253; that stretch reads PNFGTKVSNY…RMSLASFYNP (101 aa). Fe cation is bound by residues His-177, Asp-179, and His-234.

The protein belongs to the iron/ascorbate-dependent oxidoreductase family. Fe cation serves as cofactor. As to expression, expressed in all of the floral organs examined apart from the sepals.

The catalysed reaction is 1-aminocyclopropane-1-carboxylate + L-ascorbate + O2 = ethene + L-dehydroascorbate + hydrogen cyanide + CO2 + 2 H2O. The protein operates within alkene biosynthesis; ethylene biosynthesis via S-adenosyl-L-methionine; ethylene from S-adenosyl-L-methionine: step 2/2. The polypeptide is 1-aminocyclopropane-1-carboxylate oxidase 4 (ACO4) (Solanum lycopersicum (Tomato)).